A 121-amino-acid chain; its full sequence is UPF0102 protein AAur_2443 (121 aa).

The protein belongs to the UPF0102 family.

The polypeptide is UPF0102 protein AAur_2443 (Paenarthrobacter aurescens (strain TC1)).